The sequence spans 87 residues: U3-theraphotoxin-Hhn1f (87 aa).

The first 24 residues, 1–24, serve as a signal peptide directing secretion; it reads MVNMKASMFLTSAGLVLLFVVCYA. A propeptide spanning residues 25 to 52 is cleaved from the precursor; sequence SESEEKEFPKEMLSSIFAVDNDFKQEER. Cystine bridges form between cysteine 54/cysteine 67, cysteine 61/cysteine 72, and cysteine 66/cysteine 79.

This sequence belongs to the neurotoxin 10 (Hwtx-1) family. 51 (Hntx-8) subfamily. Hntx-8 sub-subfamily. In terms of tissue distribution, expressed by the venom gland.

It is found in the secreted. In terms of biological role, ion channel inhibitor. The polypeptide is U3-theraphotoxin-Hhn1f (Cyriopagopus hainanus (Chinese bird spider)).